We begin with the raw amino-acid sequence, 481 residues long: Glycogen synthase (481 aa).

Residue K16 coordinates ADP-alpha-D-glucose.

The protein belongs to the glycosyltransferase 1 family. Bacterial/plant glycogen synthase subfamily.

It carries out the reaction [(1-&gt;4)-alpha-D-glucosyl](n) + ADP-alpha-D-glucose = [(1-&gt;4)-alpha-D-glucosyl](n+1) + ADP + H(+). It participates in glycan biosynthesis; glycogen biosynthesis. Its function is as follows. Synthesizes alpha-1,4-glucan chains using ADP-glucose. The polypeptide is Glycogen synthase (Lacticaseibacillus casei (strain BL23) (Lactobacillus casei)).